Consider the following 335-residue polypeptide: Nucleoid-associated protein YejK (335 aa).

This sequence belongs to the YejK family.

The protein localises to the cytoplasm. It localises to the nucleoid. This chain is Nucleoid-associated protein YejK, found in Salmonella enteritidis PT4 (strain P125109).